The following is a 902-amino-acid chain: DNA mismatch repair protein MutS (902 aa).

654–661 (GPNMGGKS) lines the ATP pocket.

Belongs to the DNA mismatch repair MutS family.

In terms of biological role, this protein is involved in the repair of mismatches in DNA. It is possible that it carries out the mismatch recognition step. This protein has a weak ATPase activity. This chain is DNA mismatch repair protein MutS, found in Xanthomonas axonopodis pv. citri (strain 306).